The following is a 306-amino-acid chain: Foldase protein PrsA (306 aa).

The first 20 residues, 1–20 (MRRKIALFLALIFVGVSLVS), serve as a signal peptide directing secretion. The N-palmitoyl cysteine moiety is linked to residue Cys21. Cys21 carries S-diacylglycerol cysteine lipidation. The PpiC domain maps to 165-255 (FEVMRARHIL…YGYHIIKSEG (91 aa)).

It belongs to the PrsA family.

It is found in the cell membrane. The catalysed reaction is [protein]-peptidylproline (omega=180) = [protein]-peptidylproline (omega=0). Functionally, plays a major role in protein secretion by helping the post-translocational extracellular folding of several secreted proteins. This is Foldase protein PrsA from Caldanaerobacter subterraneus subsp. tengcongensis (strain DSM 15242 / JCM 11007 / NBRC 100824 / MB4) (Thermoanaerobacter tengcongensis).